The primary structure comprises 500 residues: Protein adenylyltransferase Fic (500 aa).

The helical transmembrane segment at leucine 39–leucine 59 threads the bilayer. TPR repeat units follow at residues alanine 122–histidine 155 and proline 156–histidine 190. Residues serine 247–glycine 252 carry the Inhibitory (S/T)XXXE(G/N) motif motif. ATP is bound by residues glutamate 251 and valine 333 to histidine 336. The 136-residue stretch at isoleucine 302–aspartate 437 folds into the Fido domain. Histidine 380 is a catalytic residue. ATP-binding positions include aspartate 384 to arginine 391, tyrosine 416 to tyrosine 417, and asparagine 424. Residues glycine 477–tryptophan 500 are disordered.

It belongs to the fic family. As to quaternary structure, homodimer.

The protein resides in the membrane. The enzyme catalyses L-tyrosyl-[protein] + ATP = O-(5'-adenylyl)-L-tyrosyl-[protein] + diphosphate. It catalyses the reaction L-threonyl-[protein] + ATP = 3-O-(5'-adenylyl)-L-threonyl-[protein] + diphosphate. It carries out the reaction 3-O-(5'-adenylyl)-L-threonyl-[protein] + H2O = L-threonyl-[protein] + AMP + H(+). The side chain of Glu-251 determines which of the two opposing activities (AMPylase or de-AMPylase) will take place. In response to endoplasmic reticulum stress, mediates de-AMPylase activity. Adenylyltransferase activity is inhibited by the inhibitory helix present at the N-terminus: Glu-251 binds ATP and competes with ATP-binding at Arg-391, thereby preventing adenylyltransferase activity. In unstressed cells, disengagement of Glu-251 promotes adenylyltransferase activity. Activation dissociates ATP-binding from Glu-251, allowing ordered binding of the entire ATP moiety with the alpha-phosphate in an orientation that is productive for accepting an incoming target hydroxyl side chain. In terms of biological role, protein that can both mediate the addition of adenosine 5'-monophosphate (AMP) to specific residues of target proteins (AMPylation), and the removal of the same modification from target proteins (de-AMPylation), depending on the context. The side chain of Glu-251 determines which of the two opposing activities (AMPylase or de-AMPylase) will take place. Acts as a key regulator of the unfolded protein response (UPR) by mediating AMPylation or de-AMPylation of Hsc70-3/BiP. In unstressed cells, acts as an adenylyltransferase by mediating AMPylation of Hsc70-3/BiP at 'Thr-518', thereby inactivating it. In response to endoplasmic reticulum stress, acts as a phosphodiesterase by mediating removal of ATP (de-AMPylation) from Hsc70-3/BiP at 'Thr-518', leading to restore HSPA5/BiP activity. This chain is Protein adenylyltransferase Fic, found in Culex quinquefasciatus (Southern house mosquito).